The primary structure comprises 380 residues: Probable protein phosphatase 2C 63 (380 aa).

The PPM-type phosphatase domain occupies 35–338; sequence DYSIAVVQAN…DDISVIVVYL (304 aa). The Mn(2+) site is built by D66, G67, D270, and D329.

It belongs to the PP2C family. Mg(2+) is required as a cofactor. Requires Mn(2+) as cofactor.

The catalysed reaction is O-phospho-L-seryl-[protein] + H2O = L-seryl-[protein] + phosphate. It catalyses the reaction O-phospho-L-threonyl-[protein] + H2O = L-threonyl-[protein] + phosphate. Functionally, may dephosphorylate and repress plasma membrane H(+)-ATPases (PM H(+)-ATPases, e.g. AHA1 and AHA2), thus influencing negatively plant growth and fitness. The polypeptide is Probable protein phosphatase 2C 63 (Arabidopsis thaliana (Mouse-ear cress)).